A 358-amino-acid chain; its full sequence is MGGAVSAGEDNDDLIDNLKEAQYIRTESVEQAFRAIDRGDYYLEGYRDNAYKDLAWKHGNIHLSAPCIYSEVMEALKLQPGLSFLNLGSGTGYLSTMVGLILGPFGINHGIELHSDVVEYAKEKLESFIKYSDSFDKFEFCEPAFVVGNCLEIASDSHQYDRIYCGAGVQKDHENYMKILLKVGGILVMPIEDQLTQILRTGQNTWESKNILAVSFAPLVQPNRNDNGKHDTVGLPPCAVRNLQDLARIYIRRTLRNFINEEMKAKGIAQKAPPKRKRRRCRRRRINTYVFVGNQLIPQPLDSEEDERMEDDNKEEEDKDHSEALKPEEPPRNLLREKIMSLPLPESLKAYLTYYREK.

Glycine 2 carries N-myristoyl glycine lipidation. The active site involves serine 64. AdoMet binding motif stretches follow at residues 85–94 (LNLGSGTGYL), 160–164 (YDRIY), and 181–191 (LKVGGILVMPI). The segment at 240 to 250 (VRNLQDLARIY) is BC-box. The disordered stretch occupies residues 300–339 (PLDSEEDERMEDDNKEEEDKDHSEALKPEEPPRNLLREKI). The segment covering 302–318 (DSEEDERMEDDNKEEED) has biased composition (acidic residues). The span at 319–339 (KDHSEALKPEEPPRNLLREKI) shows a compositional bias: basic and acidic residues. A CUL-box region spans residues 342-345 (LPLP).

This sequence belongs to the methyltransferase superfamily. L-isoaspartyl/D-aspartyl protein methyltransferase family. In terms of assembly, component of the probable ECS(PCMTD1) E3 ubiquitin-protein ligase complex, at least composed of CUL5, ELOB, ELOC, RBX2 and PCMTD1.

Its subcellular location is the cytoplasm. It localises to the membrane. Functionally, substrate recognition component of an ECS (Elongin BC-CUL5-SOCS-box protein) E3 ubiquitin ligase complex which mediates the ubiquitination and subsequent proteasomal degradation of target proteins. Specifically binds to the methyltransferase cofactor S-adenosylmethionine (AdoMet) via the N-terminal AdoMet binding motif, but does not display methyltransferase activity. May provide an alternate maintenance pathway for modified proteins by acting as a damage-specific E3 ubiquitin ligase adaptor protein. The chain is Protein-L-isoaspartate O-methyltransferase domain-containing protein 1 (PCMTD1) from Gallus gallus (Chicken).